The sequence spans 581 residues: Putative protein phosphatase 2C 22 (581 aa).

An N-terminal signal peptide occupies residues Met1–Ala21. In terms of domain architecture, PPM-type phosphatase spans Lys102 to Phe478. Mn(2+) contacts are provided by Asp138, Gly139, Asp373, and Asn469. The interval Ser538–Leu563 is disordered.

This sequence belongs to the PP2C family. Mg(2+) is required as a cofactor. The cofactor is Mn(2+).

The enzyme catalyses O-phospho-L-seryl-[protein] + H2O = L-seryl-[protein] + phosphate. The catalysed reaction is O-phospho-L-threonyl-[protein] + H2O = L-threonyl-[protein] + phosphate. This chain is Putative protein phosphatase 2C 22, found in Oryza sativa subsp. japonica (Rice).